Here is a 231-residue protein sequence, read N- to C-terminus: 7-cyano-7-deazaguanine synthase (231 aa).

ATP is bound at residue 8–18 (FSGGQDSTTCL). Cys188, Cys197, Cys200, and Cys203 together coordinate Zn(2+).

It belongs to the QueC family. It depends on Zn(2+) as a cofactor.

It carries out the reaction 7-carboxy-7-deazaguanine + NH4(+) + ATP = 7-cyano-7-deazaguanine + ADP + phosphate + H2O + H(+). It functions in the pathway purine metabolism; 7-cyano-7-deazaguanine biosynthesis. Catalyzes the ATP-dependent conversion of 7-carboxy-7-deazaguanine (CDG) to 7-cyano-7-deazaguanine (preQ(0)). The protein is 7-cyano-7-deazaguanine synthase of Salmonella gallinarum (strain 287/91 / NCTC 13346).